A 362-amino-acid polypeptide reads, in one-letter code: 2-aminoethylphosphonate--pyruvate transaminase (362 aa).

K193 carries the N6-(pyridoxal phosphate)lysine modification.

The protein belongs to the class-V pyridoxal-phosphate-dependent aminotransferase family. PhnW subfamily. As to quaternary structure, homodimer. Pyridoxal 5'-phosphate serves as cofactor.

It carries out the reaction (2-aminoethyl)phosphonate + pyruvate = phosphonoacetaldehyde + L-alanine. Involved in phosphonate degradation. This chain is 2-aminoethylphosphonate--pyruvate transaminase, found in Phocaeicola vulgatus (strain ATCC 8482 / DSM 1447 / JCM 5826 / CCUG 4940 / NBRC 14291 / NCTC 11154) (Bacteroides vulgatus).